The sequence spans 142 residues: Large ribosomal subunit protein uL11 (142 aa).

Belongs to the universal ribosomal protein uL11 family. Part of the ribosomal stalk of the 50S ribosomal subunit. Interacts with L10 and the large rRNA to form the base of the stalk. L10 forms an elongated spine to which L12 dimers bind in a sequential fashion forming a multimeric L10(L12)X complex. Post-translationally, one or more lysine residues are methylated.

Functionally, forms part of the ribosomal stalk which helps the ribosome interact with GTP-bound translation factors. The sequence is that of Large ribosomal subunit protein uL11 from Vibrio campbellii (strain ATCC BAA-1116).